The sequence spans 118 residues: DNA-binding protein YG5714_1868 (118 aa).

This sequence belongs to the PDCD5 family.

The chain is DNA-binding protein YG5714_1868 from Saccharolobus islandicus (strain Y.G.57.14 / Yellowstone #1) (Sulfolobus islandicus).